A 197-amino-acid polypeptide reads, in one-letter code: Imidazoleglycerol-phosphate dehydratase (197 aa).

Belongs to the imidazoleglycerol-phosphate dehydratase family.

It is found in the cytoplasm. The enzyme catalyses D-erythro-1-(imidazol-4-yl)glycerol 3-phosphate = 3-(imidazol-4-yl)-2-oxopropyl phosphate + H2O. The protein operates within amino-acid biosynthesis; L-histidine biosynthesis; L-histidine from 5-phospho-alpha-D-ribose 1-diphosphate: step 6/9. This is Imidazoleglycerol-phosphate dehydratase from Marinobacter nauticus (strain ATCC 700491 / DSM 11845 / VT8) (Marinobacter aquaeolei).